The chain runs to 620 residues: Chaperone protein HscA homolog (620 aa).

This sequence belongs to the heat shock protein 70 family.

Its function is as follows. Chaperone involved in the maturation of iron-sulfur cluster-containing proteins. Has a low intrinsic ATPase activity which is markedly stimulated by HscB. This is Chaperone protein HscA homolog from Pseudomonas syringae pv. syringae (strain B728a).